We begin with the raw amino-acid sequence, 443 residues long: 23S rRNA (uracil(1939)-C(5))-methyltransferase RlmD (443 aa).

Positions lysine 8–glutamate 66 constitute a TRAM domain. Positions 79, 85, 88, and 167 each coordinate [4Fe-4S] cluster. S-adenosyl-L-methionine is bound by residues glutamine 276, phenylalanine 305, asparagine 310, glutamate 326, aspartate 353, and aspartate 374. Cysteine 400 (nucleophile) is an active-site residue.

This sequence belongs to the class I-like SAM-binding methyltransferase superfamily. RNA M5U methyltransferase family. RlmD subfamily.

The catalysed reaction is uridine(1939) in 23S rRNA + S-adenosyl-L-methionine = 5-methyluridine(1939) in 23S rRNA + S-adenosyl-L-homocysteine + H(+). In terms of biological role, catalyzes the formation of 5-methyl-uridine at position 1939 (m5U1939) in 23S rRNA. The chain is 23S rRNA (uracil(1939)-C(5))-methyltransferase RlmD from Methylococcus capsulatus (strain ATCC 33009 / NCIMB 11132 / Bath).